We begin with the raw amino-acid sequence, 452 residues long: Phosphoglucosamine mutase (452 aa).

S109 (phosphoserine intermediate) is an active-site residue. Mg(2+) is bound by residues S109, D248, D250, and D252. A Phosphoserine modification is found at S109.

Belongs to the phosphohexose mutase family. Mg(2+) serves as cofactor. Post-translationally, activated by phosphorylation.

The catalysed reaction is alpha-D-glucosamine 1-phosphate = D-glucosamine 6-phosphate. Its function is as follows. Catalyzes the conversion of glucosamine-6-phosphate to glucosamine-1-phosphate. The chain is Phosphoglucosamine mutase from Erythrobacter litoralis (strain HTCC2594).